Here is a 269-residue protein sequence, read N- to C-terminus: Chymotrypsin-like elastase family member 2A (269 aa).

A signal peptide spans 1-16 (MIRALLLSTLVAGALS). A propeptide spans 17–28 (CGVPTYPPQLSR) (activation peptide). A Peptidase S1 domain is found at 29-267 (VVGGEDARPN…YNDWISSVIE (239 aa)). A disulfide bridge links Cys-58 with Cys-74. Catalysis depends on charge relay system residues His-73 and Asp-121. Intrachain disulfides connect Cys-155-Cys-222, Cys-186-Cys-202, and Cys-212-Cys-243. Ser-216 serves as the catalytic Charge relay system.

The protein belongs to the peptidase S1 family. Elastase subfamily. In terms of assembly, interacts with CPA1. Interacts with SERPINA1. Pancreas.

It localises to the secreted. It carries out the reaction Preferential cleavage: Leu-|-Xaa, Met-|-Xaa and Phe-|-Xaa. Hydrolyzes elastin.. Elastase that enhances insulin signaling and might have a physiologic role in cellular glucose metabolism. Circulates in plasma and reduces platelet hyperactivation, triggers both insulin secretion and degradation, and increases insulin sensitivity. The sequence is that of Chymotrypsin-like elastase family member 2A (CELA2A) from Bos taurus (Bovine).